A 120-amino-acid polypeptide reads, in one-letter code: Probable early E4 13 kDa protein (120 aa).

The polypeptide is Probable early E4 13 kDa protein (Human adenovirus A serotype 12 (HAdV-12)).